We begin with the raw amino-acid sequence, 232 residues long: E3 ubiquitin-protein ligase RNF125 (232 aa).

A compositionally biased stretch (polar residues) spans 1–10 (MGSVLSTDSG). The disordered stretch occupies residues 1-23 (MGSVLSTDSGKSAPASATARALE). Glycine 2 is lipidated: N-myristoyl glycine. Residues cysteine 37 and cysteine 40 each coordinate Zn(2+). Residues 37-76 (CAVCLEVLHQPVRTRCGHVFCRSCIATSLKNNKWTCPYCR) form an RING-type zinc finger. Residues 43 to 45 (VLH) are interaction with the C2HC RNF-type zinc finger. The Zn(2+) site is built by cysteine 52, histidine 54, cysteine 57, cysteine 60, cysteine 72, cysteine 75, cysteine 100, and cysteine 103. The C2HC RNF-type zinc-finger motif lies at 100 to 119 (CAECDTLVCLSEMRAHIRTC). Positions 109 to 113 (LSEMR) are interaction with the RING-type zinc finger. Histidine 115 and cysteine 119 together coordinate Zn(2+). Residues 120-128 (QKYIDKYGP) form a linker region region. Residues 210-224 (EEALIRRVLDRSLLE) are required for interaction with ubiquitin and for autoubiquitination.

Interacts with UBE2D1. Interacts with VCP/p97; leading to recruit RNF125 to RIGI and promote ubiquitination of RIGI. Post-translationally, autoubiquitinated, leading to its subsequent proteasomal degradation. In terms of tissue distribution, predominantly expressed in lymphoid tissues, including bone marrow, spleen and thymus. Also weakly expressed in other tissues. Predominant in the CD4(+) and CD8(+) T-cells, suggesting that it is preferentially confined to T-cells.

It localises to the golgi apparatus membrane. It carries out the reaction S-ubiquitinyl-[E2 ubiquitin-conjugating enzyme]-L-cysteine + [acceptor protein]-L-lysine = [E2 ubiquitin-conjugating enzyme]-L-cysteine + N(6)-ubiquitinyl-[acceptor protein]-L-lysine.. The protein operates within protein modification; protein ubiquitination. Functionally, E3 ubiquitin-protein ligase that mediates ubiquitination and subsequent proteasomal degradation of target proteins, such as RIGI, MAVS/IPS1, IFIH1/MDA5, JAK1 and p53/TP53. Acts as a negative regulator of type I interferon production by mediating ubiquitination of RIGI at 'Lys-181', leading to RIGI degradation. Mediates ubiquitination and subsequent degradation of p53/TP53. Mediates ubiquitination and subsequent degradation of JAK1. Acts as a positive regulator of T-cell activation. This is E3 ubiquitin-protein ligase RNF125 from Homo sapiens (Human).